A 368-amino-acid polypeptide reads, in one-letter code: Peptide chain release factor 2 (368 aa).

Gln250 carries the post-translational modification N5-methylglutamine.

The protein belongs to the prokaryotic/mitochondrial release factor family. Post-translationally, methylated by PrmC. Methylation increases the termination efficiency of RF2.

The protein localises to the cytoplasm. Its function is as follows. Peptide chain release factor 2 directs the termination of translation in response to the peptide chain termination codons UGA and UAA. The polypeptide is Peptide chain release factor 2 (Chlamydia trachomatis serovar L2b (strain UCH-1/proctitis)).